Here is a 482-residue protein sequence, read N- to C-terminus: MSLSVNEGVDVKGLVDKVLEAYPEKSRRRRAKHLNVLEAEAKDCGVKSNIKSIPGVMTIRGCAYAGSKGVVWGPIKDMIHISHGPVGCGYYSWSGRRNYYVGDTGVDKLGTMHFTSDFQEKDIVFGGDKKLHKVIEEINELFPLVNGISIQSECPIGLNGDDIEGVSKAKSEELGKPVVPVRCEGFRGVSQSLGHHIANDVIRDWILPKKTEPKEGFVSTPYDVTIIGDYNIGGDAWASRILLEEIGLRVIAQWSGDGTLAELENQPKAKVNLIHSYRSMNYIARHMEEKFGIPWMEYNFFGPSQIAESLRKIAALFDDTIKENAEKVIAKYQPMVDAVVGDAALRAHGTKGRVPLKPLGPRHRPIVDAYHDLGMEIVGTGYEFAHNDDYQRTQHYVKEGTLIYDDVTAFELEKFVELMRPDLVASGIKEKYVFQKMGLPFRQMHSWDYSGPYHGYDGFAIFARDMDLAINNPVWGIMKAPF.

[8Fe-7S] cluster contacts are provided by Cys-62, Cys-88, and Cys-154. His-445 contacts [7Fe-Mo-9S-C-homocitryl] cluster.

It belongs to the NifD/NifK/NifE/NifN family. As to quaternary structure, tetramer of two alpha and two beta chains. Forms complex with the iron protein (nitrogenase component 2). [8Fe-7S] cluster is required as a cofactor. The cofactor is [7Fe-Mo-9S-C-homocitryl] cluster.

It catalyses the reaction N2 + 8 reduced [2Fe-2S]-[ferredoxin] + 16 ATP + 16 H2O = H2 + 8 oxidized [2Fe-2S]-[ferredoxin] + 2 NH4(+) + 16 ADP + 16 phosphate + 6 H(+). This molybdenum-iron protein is part of the nitrogenase complex that catalyzes the key enzymatic reactions in nitrogen fixation. The protein is Nitrogenase molybdenum-iron protein alpha chain (nifD) of Azospirillum brasilense.